The sequence spans 398 residues: T-box transcription factor TBX1 (398 aa).

The segment at 23-72 is disordered; it reads AAGGFPGAASPGADPYGPREPPPPPPRYDPCAAAAPGAPGPPPPPHAYPF. A compositionally biased stretch (low complexity) spans 29–38; the sequence is GAASPGADPY. 2 stretches are compositionally biased toward pro residues: residues 40–50 and 60–69; these read PREPPPPPPRY and APGPPPPPHA. The T-box DNA-binding region spans 119 to 297; the sequence is LWDEFNQLGT…SNPFAKGFRD (179 aa).

As to quaternary structure, binds DNA as a dimer. Interacts with DSCR6. Interacts with NKX2-5.

Its subcellular location is the nucleus. Transcription factor that plays a key role in cardiovascular development by promoting pharyngeal arch segmentation during embryonic development. Also involved in craniofacial muscle development. Together with NKX2-5, acts as a regulator of asymmetric cardiac morphogenesis by promoting expression of PITX2. Acts upstream of TBX1 for the formation of the thymus and parathyroid glands from the third pharyngeal pouch. Required for hair follicle stem cell self-renewal. Binds to the palindromic T site 5'-TTCACACCTAGGTGTGAA-3' DNA sequence. The chain is T-box transcription factor TBX1 from Homo sapiens (Human).